A 76-amino-acid polypeptide reads, in one-letter code: Conotoxin ArMKLT2-032 (76 aa).

Residues 1–22 (MKLTCVLIIAVLFLTACQLTTG) form the signal peptide. Positions 23 to 46 (ETYSRGEQKDHALRSTDKNSKLTR) are excised as a propeptide. Pyrrolidone carboxylic acid is present on Gln47. Intrachain disulfides connect Cys48/Cys62, Cys55/Cys66, and Cys61/Cys73.

Belongs to the conotoxin O1 superfamily. As to expression, expressed by the venom duct.

The protein localises to the secreted. The protein is Conotoxin ArMKLT2-032 of Conus arenatus (Sand-dusted cone).